An 88-amino-acid polypeptide reads, in one-letter code: Phosphoribosyl-ATP pyrophosphatase (88 aa).

It belongs to the PRA-PH family.

The protein resides in the cytoplasm. It catalyses the reaction 1-(5-phospho-beta-D-ribosyl)-ATP + H2O = 1-(5-phospho-beta-D-ribosyl)-5'-AMP + diphosphate + H(+). The protein operates within amino-acid biosynthesis; L-histidine biosynthesis; L-histidine from 5-phospho-alpha-D-ribose 1-diphosphate: step 2/9. This is Phosphoribosyl-ATP pyrophosphatase from Cutibacterium acnes (strain DSM 16379 / KPA171202) (Propionibacterium acnes).